The sequence spans 336 residues: HTH-type transcriptional repressor PurR (336 aa).

Positions 2-56 constitute an HTH lacI-type domain; it reads ATIKDVAKLAGVSTTTVSHVINKTRFVAEDTSKAVWDAIQQLNYSPSAVARSLKV. Positions 4–23 form a DNA-binding region, H-T-H motif; the sequence is IKDVAKLAGVSTTTVSHVIN. The DNA-binding element occupies 48–56; sequence SAVARSLKV. 4 residues coordinate hypoxanthine: tyrosine 73, lysine 188, phenylalanine 219, and aspartate 273.

Homodimer.

It functions in the pathway purine metabolism; purine nucleotide biosynthesis [regulation]. Its function is as follows. Is the main repressor of the genes involved in the de novo synthesis of purine nucleotides, regulating purB, purC, purEK, purF, purHD, purL, purMN and guaBA expression. PurR is allosterically activated to bind its cognate DNA by binding the purine corepressors, hypoxanthine or guanine, thereby effecting transcription repression. The polypeptide is HTH-type transcriptional repressor PurR (Actinobacillus pleuropneumoniae serotype 5b (strain L20)).